The chain runs to 519 residues: Sodium-dependent dicarboxylate transporter SdcS (519 aa).

14 consecutive transmembrane segments (helical) span residues 29 to 49 (VGQLVGLILGPLLFVLTLLLF), 59 to 79 (VFVLAITLWIATWWITEAIPI), 103 to 123 (AQYGNDIIFLFLGGFILAIAM), 136 to 156 (IINTLGTSTGRILLGFMIATG), 159 to 179 (SMFVSNTAAVMIMIPIGLAII), 201 to 221 (ALVLAIGYAGTIGGLGTLIGT), 241 to 261 (FAKWMIIGVPTVIVLLFLVWI), 297 to 317 (KVVLIVFLLASFLWITREFLL), 322 to 342 (FTSEVADGTIAMFISVLLFLI), 362 to 382 (LPWGVLILFGGGLALAKGISE), 395 to 415 (LIEGVSPLVIVLVITIFVLFL), 428 to 448 (ILPILATLSVAVNVHPLLLMV), 451 to 471 (AMAANCAYMLPVGTPPNAIVF), and 490 to 510 (LLSIVVIVLVVYFLVPPVLGI).

This sequence belongs to the SLC13A/DASS transporter (TC 2.A.47) family. NADC subfamily.

The protein localises to the cell membrane. Functionally, mediates the transport of dicarboxylates across the cytoplasmic membrane via a Na(+)-electrochemical gradient. In Staphylococcus saprophyticus subsp. saprophyticus (strain ATCC 15305 / DSM 20229 / NCIMB 8711 / NCTC 7292 / S-41), this protein is Sodium-dependent dicarboxylate transporter SdcS (sdcS).